Consider the following 879-residue polypeptide: Alanine--tRNA ligase (879 aa).

The Zn(2+) site is built by His566, His570, Cys668, and His672.

The protein belongs to the class-II aminoacyl-tRNA synthetase family. Requires Zn(2+) as cofactor.

The protein localises to the cytoplasm. The enzyme catalyses tRNA(Ala) + L-alanine + ATP = L-alanyl-tRNA(Ala) + AMP + diphosphate. Its function is as follows. Catalyzes the attachment of alanine to tRNA(Ala) in a two-step reaction: alanine is first activated by ATP to form Ala-AMP and then transferred to the acceptor end of tRNA(Ala). Also edits incorrectly charged Ser-tRNA(Ala) and Gly-tRNA(Ala) via its editing domain. This is Alanine--tRNA ligase from Listeria welshimeri serovar 6b (strain ATCC 35897 / DSM 20650 / CCUG 15529 / CIP 8149 / NCTC 11857 / SLCC 5334 / V8).